A 182-amino-acid chain; its full sequence is Pyruvoyl-dependent arginine decarboxylase (182 aa).

Ser44 carries the post-translational modification Pyruvic acid (Ser).

It belongs to the PdaD family. Pyruvate is required as a cofactor.

The catalysed reaction is L-arginine + H(+) = agmatine + CO2. The sequence is that of Pyruvoyl-dependent arginine decarboxylase from Picrophilus torridus (strain ATCC 700027 / DSM 9790 / JCM 10055 / NBRC 100828 / KAW 2/3).